We begin with the raw amino-acid sequence, 373 residues long: MEFKLKHKDGMARVCEITTAHSTFLTPVFMPVGTVGAVKSLDANDMKNELDAKIILANTYHMYLRPTSKVVKDFGGLHGFTKFDRSFLTDSGGFQAFSLSKNSKHFNEGIEFKSHIDGSHHLFTPKSVLDTQYDFNSDIMMILDDLVALPATKERVKISVDRTILWAKEAITYHKSMQNKGIGIGQNIFGIIQGGTDYEERKRCALSLNEMPFDGLAIGGLSVGEENALMYETVQNLNPYLDENRPRYLMGVGTPEDLVENVERGVDMFDCVMPTRNARNGTFFTSFGKFNIKKAEFINDHEAIDPACSCYTCRNFSRGYLNHLFKAKELTFFRLASLHNLHYYLELARKMREAILNNSFTQFKRNFYHLRGK.

Aspartate 90 acts as the Proton acceptor in catalysis. Substrate contacts are provided by residues 90–94, aspartate 144, glutamine 193, and glycine 220; that span reads DSGGF. Positions 251–257 are RNA binding; sequence GVGTPED. The active-site Nucleophile is the aspartate 270. An RNA binding; important for wobble base 34 recognition region spans residues 275 to 279; it reads TRNAR. Residues cysteine 308, cysteine 310, cysteine 313, and histidine 339 each coordinate Zn(2+).

This sequence belongs to the queuine tRNA-ribosyltransferase family. In terms of assembly, homodimer. Within each dimer, one monomer is responsible for RNA recognition and catalysis, while the other monomer binds to the replacement base PreQ1. It depends on Zn(2+) as a cofactor.

It catalyses the reaction 7-aminomethyl-7-carbaguanine + guanosine(34) in tRNA = 7-aminomethyl-7-carbaguanosine(34) in tRNA + guanine. It functions in the pathway tRNA modification; tRNA-queuosine biosynthesis. Catalyzes the base-exchange of a guanine (G) residue with the queuine precursor 7-aminomethyl-7-deazaguanine (PreQ1) at position 34 (anticodon wobble position) in tRNAs with GU(N) anticodons (tRNA-Asp, -Asn, -His and -Tyr). Catalysis occurs through a double-displacement mechanism. The nucleophile active site attacks the C1' of nucleotide 34 to detach the guanine base from the RNA, forming a covalent enzyme-RNA intermediate. The proton acceptor active site deprotonates the incoming PreQ1, allowing a nucleophilic attack on the C1' of the ribose to form the product. After dissociation, two additional enzymatic reactions on the tRNA convert PreQ1 to queuine (Q), resulting in the hypermodified nucleoside queuosine (7-(((4,5-cis-dihydroxy-2-cyclopenten-1-yl)amino)methyl)-7-deazaguanosine). In Campylobacter jejuni subsp. jejuni serotype O:23/36 (strain 81-176), this protein is Queuine tRNA-ribosyltransferase.